A 911-amino-acid chain; its full sequence is Envelope glycoprotein B (911 aa).

An N-terminal signal peptide occupies residues 1–30 (MRVCSEASPRRRQVTMLVSLLLFSAQAGFC). The Virion surface segment spans residues 31–778 (ARSAAGHSGI…SGISSFLANP (748 aa)). Cystine bridges form between Cys-86–Cys-543, Cys-103–Cys-499, Cys-177–Cys-239, Cys-330–Cys-378, and Cys-566–Cys-635. Asn-111 and Asn-130 each carry an N-linked (GlcNAc...) asparagine; by host glycan. The involved in fusion and/or binding to host membrane stretch occupies residues 143–149 (TWKGFGL). The N-linked (GlcNAc...) asparagine; by host glycan is linked to Asn-221. The interval 228–233 (ALGYRT) is involved in fusion and/or binding to host membrane. N-linked (GlcNAc...) asparagine; by host glycosylation is found at Asn-347, Asn-369, Asn-384, Asn-438, and Asn-594. The disordered stretch occupies residues 591-610 (RPANNSDVGGSQQAGEAEAQ). Positions 599-610 (GGSQQAGEAEAQ) are enriched in low complexity. N-linked (GlcNAc...) asparagine; by host glycosylation is present at Asn-662. The interval 722–776 (LDTALKFDDGLATLRAIGEFLTNTLGGAGKVLGNVVMGAAAAIISTVSGISSFLA) is hydrophobic membrane proximal region. Residues 779 to 799 (FAALGIGIAVIVCVIMGLLAF) form a helical membrane-spanning segment. The Intravirion portion of the chain corresponds to 800-911 (RYVMTLRANP…EDYYYDDEHL (112 aa)).

It belongs to the herpesviridae glycoprotein B family. In terms of assembly, homotrimer; disulfide-linked. Binds to heparan sulfate proteoglycans. Interacts with gH/gL heterodimer.

The protein localises to the virion membrane. It is found in the host cell membrane. Its subcellular location is the host endosome membrane. The protein resides in the host Golgi apparatus membrane. Its function is as follows. Envelope glycoprotein that forms spikes at the surface of virion envelope. Essential for the initial attachment to heparan sulfate moieties of the host cell surface proteoglycans. Involved in fusion of viral and cellular membranes leading to virus entry into the host cell. Following initial binding to its host receptors, membrane fusion is mediated by the fusion machinery composed at least of gB and the heterodimer gH/gL. May be involved in the fusion between the virion envelope and the outer nuclear membrane during virion egress. This chain is Envelope glycoprotein B, found in Amazona oratrix (yellow-headed parrot).